Consider the following 294-residue polypeptide: Bifunctional protein FolD (294 aa).

Residues 166–168 (GRS), serine 191, and isoleucine 232 contribute to the NADP(+) site.

The protein belongs to the tetrahydrofolate dehydrogenase/cyclohydrolase family. Homodimer.

It catalyses the reaction (6R)-5,10-methylene-5,6,7,8-tetrahydrofolate + NADP(+) = (6R)-5,10-methenyltetrahydrofolate + NADPH. The catalysed reaction is (6R)-5,10-methenyltetrahydrofolate + H2O = (6R)-10-formyltetrahydrofolate + H(+). It functions in the pathway one-carbon metabolism; tetrahydrofolate interconversion. Catalyzes the oxidation of 5,10-methylenetetrahydrofolate to 5,10-methenyltetrahydrofolate and then the hydrolysis of 5,10-methenyltetrahydrofolate to 10-formyltetrahydrofolate. The sequence is that of Bifunctional protein FolD from Bradyrhizobium diazoefficiens (strain JCM 10833 / BCRC 13528 / IAM 13628 / NBRC 14792 / USDA 110).